The chain runs to 1516 residues: Lysine-specific demethylase 5C (1516 aa).

In terms of domain architecture, JmjN spans 14-55 (CPVFEPSWAEFRDPLGYIAKIRPIAEKSGICKIRPPADWQPP). Residues 24 to 128 (FRDPLGYIAK…IVYPYEMYQS (105 aa)) enclose the ARID domain. Positions 142 to 151 (NEEKDKEYKP) are enriched in basic and acidic residues. The interval 142 to 186 (NEEKDKEYKPHSIPLRQSVQPSKFNSYGRRAKRLQPDPEPTEEDI) is disordered. Positions 156–166 (LRQSVQPSKFN) are enriched in polar residues. Glycyl lysine isopeptide (Lys-Gly) (interchain with G-Cter in SUMO2) cross-links involve residues lysine 164, lysine 188, lysine 203, and lysine 233. The interval 216-262 (LRKKDKEGPECPPTVVVKEESGGDVKVESTSPKTFLESKEELSHSPE) is disordered. Residues 232-242 (VKEESGGDVKV) show a composition bias toward basic and acidic residues. The residue at position 246 (serine 246) is a Phosphoserine. Lysine 254 is covalently cross-linked (Glycyl lysine isopeptide (Lys-Gly) (interchain with G-Cter in SUMO2)). A phosphoserine mark is found at serine 260 and serine 276. Residues 283 to 333 (SYVCRMCSRGDEDDKLLLCDGCDDNYHIFCLLPPLPEIPKGVWRCPKCVMA) form a PHD-type 1 zinc finger. Tyrosine 399 contacts 2-oxoglutarate. The JmjC domain occupies 427–593 (EYATSGWNLN…AGRQCIEHYR (167 aa)). Histidine 473 and glutamate 475 together coordinate Fe cation. The 2-oxoglutarate site is built by serine 481, asparagine 483, and lysine 491. Fe cation is bound at residue histidine 561. The segment at 666-718 (CIKCKTTCFLSALACYDCPDGLVCLSHINDLCKCSSSRQYLRYRYTLDELPAM) adopts a C5HC2 zinc-finger fold. Serine 852 and serine 856 each carry phosphoserine. Residue lysine 1086 forms a Glycyl lysine isopeptide (Lys-Gly) (interchain with G-Cter in SUMO2) linkage. A PHD-type 2 zinc finger spans residues 1144–1209 (TSICVCGQVP…KFLCPLCMRS (66 aa)). The tract at residues 1274–1305 (LQAEPRPEEPPTYPSTPAFDPLREGSGKDMPK) is disordered. Over residues 1294–1304 (PLREGSGKDMP) the composition is skewed to basic and acidic residues. Serine 1318 bears the Phosphoserine mark. The disordered stretch occupies residues 1400-1516 (ERHGSRARGR…CPQQPPQQQL (117 aa)). Positions 1404–1419 (SRARGRALERRRRRKV) are enriched in basic residues. Over residues 1420-1437 (DRGGEGDDPAREELEPKR) the composition is skewed to basic and acidic residues. Positions 1444 to 1459 (EAEEAHEEEELEEETG) are enriched in acidic residues. Polar residues-rich tracts occupy residues 1471 to 1481 (GSPSTQENQNG) and 1489 to 1500 (SSGSSVPFSTLT).

Belongs to the JARID1 histone demethylase family. As to quaternary structure, part of two distinct complexes, one containing E2F6, and the other containing REST. Interacts with ZMYND8. It depends on Fe(2+) as a cofactor.

The protein resides in the nucleus. It catalyses the reaction N(6),N(6),N(6)-trimethyl-L-lysyl(4)-[histone H3] + 3 2-oxoglutarate + 3 O2 = L-lysyl(4)-[histone H3] + 3 formaldehyde + 3 succinate + 3 CO2. Its function is as follows. Histone demethylase that specifically demethylates 'Lys-4' of histone H3, thereby playing a central role in histone code. Does not demethylate histone H3 'Lys-9', H3 'Lys-27', H3 'Lys-36', H3 'Lys-79' or H4 'Lys-20'. Demethylates trimethylated and dimethylated but not monomethylated H3 'Lys-4'. Participates in transcriptional repression of neuronal genes by recruiting histone deacetylases and REST at neuron-restrictive silencer elements. The sequence is that of Lysine-specific demethylase 5C (KDM5C) from Sus scrofa (Pig).